Here is a 236-residue protein sequence, read N- to C-terminus: 1-(5-phosphoribosyl)-5-[(5-phosphoribosylamino)methylideneamino] imidazole-4-carboxamide isomerase (236 aa).

Asp-8 serves as the catalytic Proton acceptor. The active-site Proton donor is Asp-129.

It belongs to the HisA/HisF family.

The protein localises to the cytoplasm. It catalyses the reaction 1-(5-phospho-beta-D-ribosyl)-5-[(5-phospho-beta-D-ribosylamino)methylideneamino]imidazole-4-carboxamide = 5-[(5-phospho-1-deoxy-D-ribulos-1-ylimino)methylamino]-1-(5-phospho-beta-D-ribosyl)imidazole-4-carboxamide. Its pathway is amino-acid biosynthesis; L-histidine biosynthesis; L-histidine from 5-phospho-alpha-D-ribose 1-diphosphate: step 4/9. The sequence is that of 1-(5-phosphoribosyl)-5-[(5-phosphoribosylamino)methylideneamino] imidazole-4-carboxamide isomerase from Methanocorpusculum labreanum (strain ATCC 43576 / DSM 4855 / Z).